We begin with the raw amino-acid sequence, 418 residues long: 26S proteasome regulatory subunit 6B (418 aa).

M1 is modified (N-acetylmethionine). At S21 the chain carries Phosphoserine. Position 25 is a phosphothreonine (T25). The residue at position 28 (S28) is a Phosphoserine. 206-213 (GPPGCGKT) is a binding site for ATP. Residues K397 and K401 each carry the N6-acetyllysine modification.

This sequence belongs to the AAA ATPase family. Component of the 19S proteasome regulatory particle complex. The 26S proteasome consists of a 20S core particle (CP) and two 19S regulatory subunits (RP). The regulatory particle is made of a lid composed of 9 subunits, a base containing 6 ATPases including PSMC4 and few additional components. Interacts with NR1I3. Interacts with PAAF1. Interacts with TRIM5. Interacts with ZFAND1.

The protein resides in the cytoplasm. Its subcellular location is the nucleus. Component of the 26S proteasome, a multiprotein complex involved in the ATP-dependent degradation of ubiquitinated proteins. This complex plays a key role in the maintenance of protein homeostasis by removing misfolded or damaged proteins, which could impair cellular functions, and by removing proteins whose functions are no longer required. Therefore, the proteasome participates in numerous cellular processes, including cell cycle progression, apoptosis, or DNA damage repair. PSMC4 belongs to the heterohexameric ring of AAA (ATPases associated with diverse cellular activities) proteins that unfolds ubiquitinated target proteins that are concurrently translocated into a proteolytic chamber and degraded into peptides. The protein is 26S proteasome regulatory subunit 6B (PSMC4) of Bos taurus (Bovine).